A 139-amino-acid chain; its full sequence is Small ribosomal subunit protein bS6 (139 aa).

Positions 97-139 are disordered; the sequence is TEASPMAKAKDERDSRRSSEGERRSAPAEATEEVKETAEKAAE. Positions 104–139 are enriched in basic and acidic residues; it reads KAKDERDSRRSSEGERRSAPAEATEEVKETAEKAAE.

The protein belongs to the bacterial ribosomal protein bS6 family.

Binds together with bS18 to 16S ribosomal RNA. The chain is Small ribosomal subunit protein bS6 from Shewanella sediminis (strain HAW-EB3).